The sequence spans 100 residues: UPF0213 protein YhbQ (100 aa).

Residues 2 to 77 (TPWYLYLIRT…KQLTKRQKER (76 aa)) form the GIY-YIG domain.

Belongs to the UPF0213 family.

The polypeptide is UPF0213 protein YhbQ (Escherichia coli O8 (strain IAI1)).